The chain runs to 109 residues: uncharacterized protein (109 aa).

Positions 63–109 (DPSTWEPEEHETEHCRGHTLPEKKQKPQGGHGSDKDEDKGNCGCDHC) are disordered. Basic and acidic residues-rich tracts occupy residues 73–87 (ETEH…EKKQ) and 94–109 (GSDK…CDHC).

This is an uncharacterized protein from Caenorhabditis elegans.